The sequence spans 86 residues: Protein Tat (86 aa).

The interval methionine 1–asparagine 24 is interaction with human CREBBP. The transactivation stretch occupies residues methionine 1–glycine 48. The Zn(2+) site is built by cysteine 22, cysteine 25, and cysteine 27. The interval cysteine 22 to cysteine 37 is cysteine-rich. Lysine 28 bears the N6-acetyllysine; by host PCAF mark. The Zn(2+) site is built by cysteine 30, histidine 33, cysteine 34, and cysteine 37. A core region spans residues phenylalanine 38–glycine 48. Residues glycine 48–proline 58 show a composition bias toward basic residues. The tract at residues glycine 48 to glutamate 86 is disordered. A Nuclear localization signal, RNA-binding (TAR), and protein transduction motif is present at residues arginine 49 to arginine 57. An interaction with the host capping enzyme RNGTT region spans residues arginine 49 to glutamate 86. N6-acetyllysine; by host EP300 and GCN5L2 is present on residues lysine 50 and lysine 51. An asymmetric dimethylarginine; by host PRMT6 mark is found at arginine 52 and arginine 53. Positions serine 62 to glycine 79 are enriched in polar residues. Lysine 71 participates in a covalent cross-link: Glycyl lysine isopeptide (Lys-Gly) (interchain with G-Cter in ubiquitin). Positions arginine 78–aspartate 80 match the Cell attachment site motif.

The protein belongs to the lentiviruses Tat family. Interacts with host CCNT1. Associates with the P-TEFb complex composed at least of Tat, P-TEFb (CDK9 and CCNT1), TAR RNA, RNA Pol II. Recruits the HATs CREBBP, TAF1/TFIID, EP300, PCAF and GCN5L2. Interacts with host KAT5/Tip60; this interaction targets the latter to degradation. Interacts with the host deacetylase SIRT1. Interacts with host capping enzyme RNGTT; this interaction stimulates RNGTT. Binds to host KDR, and to the host integrins ITGAV/ITGB3 and ITGA5/ITGB1. Interacts with host KPNB1/importin beta-1 without previous binding to KPNA1/importin alpha-1. Interacts with EIF2AK2. Interacts with host nucleosome assembly protein NAP1L1; this interaction may be required for the transport of Tat within the nucleus, since the two proteins interact at the nuclear rim. Interacts with host C1QBP/SF2P32; this interaction involves lysine-acetylated Tat. Interacts with the host chemokine receptors CCR2, CCR3 and CXCR4. Interacts with host DPP4/CD26; this interaction may trigger an anti-proliferative effect. Interacts with host LDLR. Interacts with the host extracellular matrix metalloproteinase MMP1. Interacts with host PRMT6; this interaction mediates Tat's methylation. Interacts with, and is ubiquitinated by MDM2/Hdm2. Interacts with host PSMC3 and HTATIP2. Interacts with STAB1; this interaction may overcome SATB1-mediated repression of IL2 and IL2RA (interleukin) in T cells by binding to the same domain than HDAC1. Interacts (when acetylated) with human CDK13, thereby increasing HIV-1 mRNA splicing and promoting the production of the doubly spliced HIV-1 protein Nef. Interacts with host TBP; this interaction modulates the activity of transcriptional pre-initiation complex. Interacts with host RELA. Interacts with host PLSCR1; this interaction negatively regulates Tat transactivation activity by altering its subcellular distribution. Post-translationally, asymmetrical arginine methylation by host PRMT6 seems to diminish the transactivation capacity of Tat and affects the interaction with host CCNT1. In terms of processing, acetylation by EP300, CREBBP, GCN5L2/GCN5 and PCAF regulates the transactivation activity of Tat. EP300-mediated acetylation of Lys-50 promotes dissociation of Tat from the TAR RNA through the competitive binding to PCAF's bromodomain. In addition, the non-acetylated Tat's N-terminus can also interact with PCAF. PCAF-mediated acetylation of Lys-28 enhances Tat's binding to CCNT1. Lys-50 is deacetylated by SIRT1. Polyubiquitination by host MDM2 does not target Tat to degradation, but activates its transactivation function and fosters interaction with CCNT1 and TAR RNA. Post-translationally, phosphorylated by EIF2AK2 on serine and threonine residues adjacent to the basic region important for TAR RNA binding and function. Phosphorylation of Tat by EIF2AK2 is dependent on the prior activation of EIF2AK2 by dsRNA.

The protein resides in the host nucleus. The protein localises to the host nucleolus. Its subcellular location is the host cytoplasm. It localises to the secreted. Transcriptional activator that increases RNA Pol II processivity, thereby increasing the level of full-length viral transcripts. Recognizes a hairpin structure at the 5'-LTR of the nascent viral mRNAs referred to as the transactivation responsive RNA element (TAR) and recruits the cyclin T1-CDK9 complex (P-TEFb complex) that will in turn hyperphosphorylate the RNA polymerase II to allow efficient elongation. The CDK9 component of P-TEFb and other Tat-activated kinases hyperphosphorylate the C-terminus of RNA Pol II that becomes stabilized and much more processive. Other factors such as HTATSF1/Tat-SF1, SUPT5H/SPT5, and HTATIP2 are also important for Tat's function. Besides its effect on RNA Pol II processivity, Tat induces chromatin remodeling of proviral genes by recruiting the histone acetyltransferases (HATs) CREBBP, EP300 and PCAF to the chromatin. This also contributes to the increase in proviral transcription rate, especially when the provirus integrates in transcriptionally silent region of the host genome. To ensure maximal activation of the LTR, Tat mediates nuclear translocation of NF-kappa-B by interacting with host RELA. Through its interaction with host TBP, Tat may also modulate transcription initiation. Tat can reactivate a latently infected cell by penetrating in it and transactivating its LTR promoter. In the cytoplasm, Tat is thought to act as a translational activator of HIV-1 mRNAs. Functionally, extracellular circulating Tat can be endocytosed by surrounding uninfected cells via the binding to several surface receptors such as CD26, CXCR4, heparan sulfate proteoglycans (HSPG) or LDLR. Neurons are rarely infected, but they internalize Tat via their LDLR. Through its interaction with nuclear HATs, Tat is potentially able to control the acetylation-dependent cellular gene expression. Modulates the expression of many cellular genes involved in cell survival, proliferation or in coding for cytokines or cytokine receptors. Tat plays a role in T-cell and neurons apoptosis. Tat induced neurotoxicity and apoptosis probably contribute to neuroAIDS. Circulating Tat also acts as a chemokine-like and/or growth factor-like molecule that binds to specific receptors on the surface of the cells, affecting many cellular pathways. In the vascular system, Tat binds to ITGAV/ITGB3 and ITGA5/ITGB1 integrins dimers at the surface of endothelial cells and competes with bFGF for heparin-binding sites, leading to an excess of soluble bFGF. This Homo sapiens (Human) protein is Protein Tat.